Reading from the N-terminus, the 512-residue chain is 2-isopropylmalate synthase (512 aa).

A Pyruvate carboxyltransferase domain is found at 5–268; the sequence is LIIFDTTLRD…DLGIATQHIL (264 aa). The Mn(2+) site is built by Asp-14, His-202, His-204, and Asn-239. A regulatory domain region spans residues 394-512; it reads GFVSLFQQSE…NKADRVAAQG (119 aa).

It belongs to the alpha-IPM synthase/homocitrate synthase family. LeuA type 1 subfamily. Homodimer. The cofactor is Mn(2+).

The protein resides in the cytoplasm. It carries out the reaction 3-methyl-2-oxobutanoate + acetyl-CoA + H2O = (2S)-2-isopropylmalate + CoA + H(+). The protein operates within amino-acid biosynthesis; L-leucine biosynthesis; L-leucine from 3-methyl-2-oxobutanoate: step 1/4. Functionally, catalyzes the condensation of the acetyl group of acetyl-CoA with 3-methyl-2-oxobutanoate (2-ketoisovalerate) to form 3-carboxy-3-hydroxy-4-methylpentanoate (2-isopropylmalate). This chain is 2-isopropylmalate synthase, found in Verminephrobacter eiseniae (strain EF01-2).